Here is a 609-residue protein sequence, read N- to C-terminus: Interleukin-1 receptor-associated kinase 3 (609 aa).

The Death domain maps to 41-106; it reads WRGLAERLSN…RAIHLIINYG (66 aa). Position 110 is a phosphothreonine (threonine 110). Residues 178-463 form the Protein kinase domain; the sequence is FHKDFLIGEG…SSLESTQPSL (286 aa). Residues 184-192, lysine 205, 308-311, and aspartate 324 contribute to the ATP site; these read IGEGEIFEV and SSAN. Serine 480 is modified (phosphoserine).

It belongs to the protein kinase superfamily. TKL Ser/Thr protein kinase family. Pelle subfamily. Monomer. Homodimer. May interact with IRAK4 (when phosphorylated). Interacts (when phosphorylated at Thr-110) with PIN1 (via WW domain) in response to IL33-mediated (but not TLR4 ligand LPS) dendritic cell stimulation. Expressed in inflamed lung macrophages (at protein level). Expressed in dendritic cells (at protein level). Highly expressed in liver and thymus and at lower levels in heart, brain, spleen and kidney.

It localises to the cytoplasm. The protein localises to the nucleus. Putative inactive protein kinase which regulates signaling downstream of immune receptors including IL1R and Toll-like receptors. Inhibits dissociation of IRAK1 and IRAK4 from the Toll-like receptor signaling complex by either inhibiting the phosphorylation of IRAK1 and IRAK4 or stabilizing the receptor complex. Upon IL33-induced lung inflammation, positively regulates expression of IL6, CSF3, CXCL2 and CCL5 mRNAs in dendritic cells. The chain is Interleukin-1 receptor-associated kinase 3 from Mus musculus (Mouse).